We begin with the raw amino-acid sequence, 304 residues long: Glycine--tRNA ligase alpha subunit (304 aa).

The protein belongs to the class-II aminoacyl-tRNA synthetase family. In terms of assembly, tetramer of two alpha and two beta subunits.

Its subcellular location is the cytoplasm. It carries out the reaction tRNA(Gly) + glycine + ATP = glycyl-tRNA(Gly) + AMP + diphosphate. This chain is Glycine--tRNA ligase alpha subunit, found in Serratia proteamaculans (strain 568).